A 249-amino-acid polypeptide reads, in one-letter code: Small ribosomal subunit protein eS6 (249 aa).

Over residues 223–238 (LRQRDHSKKHTQKVHA) the composition is skewed to basic residues. The interval 223–249 (LRQRDHSKKHTQKVHAQRAEVAAFQKK) is disordered.

It belongs to the eukaryotic ribosomal protein eS6 family. As to quaternary structure, component of the small ribosomal subunit. Part of the small subunit (SSU) processome, composed of more than 70 proteins and the RNA chaperone small nucleolar RNA (snoRNA) U3. In terms of processing, ribosomal protein S6 is the major substrate of protein kinases in eukaryote ribosomes.

It is found in the cytoplasm. The protein localises to the nucleus. Its subcellular location is the nucleolus. Functionally, component of the 40S small ribosomal subunit. Plays an important role in controlling cell growth and proliferation through the selective translation of particular classes of mRNA. Part of the small subunit (SSU) processome, first precursor of the small eukaryotic ribosomal subunit. During the assembly of the SSU processome in the nucleolus, many ribosome biogenesis factors, an RNA chaperone and ribosomal proteins associate with the nascent pre-rRNA and work in concert to generate RNA folding, modifications, rearrangements and cleavage as well as targeted degradation of pre-ribosomal RNA by the RNA exosome. This is Small ribosomal subunit protein eS6 (RPS6) from Leishmania infantum.